The following is an 82-amino-acid chain: Large ribosomal subunit protein uL29 (82 aa).

It belongs to the universal ribosomal protein uL29 family.

In Trichodesmium erythraeum (strain IMS101), this protein is Large ribosomal subunit protein uL29.